Consider the following 154-residue polypeptide: Ribonuclease H (154 aa).

The region spanning 1–142 is the RNase H type-1 domain; sequence MRKQIEIFTD…CDELAKQGAE (142 aa). The Mg(2+) site is built by Asp-10, Glu-48, Asp-70, and Asp-134.

This sequence belongs to the RNase H family. As to quaternary structure, monomer. Requires Mg(2+) as cofactor.

Its subcellular location is the cytoplasm. The enzyme catalyses Endonucleolytic cleavage to 5'-phosphomonoester.. Endonuclease that specifically degrades the RNA of RNA-DNA hybrids. The polypeptide is Ribonuclease H (Actinobacillus succinogenes (strain ATCC 55618 / DSM 22257 / CCUG 43843 / 130Z)).